The sequence spans 402 residues: MNVLVINSGSSSIKYQLIDMEREVPLCSGLVERIGEPMGKLTHKIRPDAEGEEKLTFEQPFTNHVEGMKRVVELITDADKGVIKDKSEIGAIGHRVLLGGEEIKQSVRIDDWAKGVIRDYIPLGPLHNPANLAGIEVAEELFPGLPNVGVFDTEFHQSMPAKAYLYPLPIELYEELKIRRYGFHGTSHRYITKRTAQYLGKPLDELNIITCHLGNGCSMAAVKNGKCVDTTMGITPLEGLMMGTRCGDIDPAIVPFLMEKKNLSPAEADTLMNKQSGLKGMCGMNDMRDLHAARENGNERAQLAFEMFTYRIKKYIGAYYAVLGRVDAVVFTAGIGENDDFVRAEVCAGLDSLGIAVDPARNAVRNGQPRHISPDGSRVAVLVVPTNEELEIAQATLDVLKG.

Residue Asn-7 coordinates Mg(2+). Lys-14 contacts ATP. Arg-95 is a binding site for substrate. Asp-152 (proton donor/acceptor) is an active-site residue. Residues 212–216, 286–288, and 334–338 contribute to the ATP site; these read HLGNG, DMR, and GIGEN. Glu-388 is a binding site for Mg(2+).

The protein belongs to the acetokinase family. As to quaternary structure, homodimer. It depends on Mg(2+) as a cofactor. Mn(2+) is required as a cofactor.

It localises to the cytoplasm. It catalyses the reaction acetate + ATP = acetyl phosphate + ADP. The protein operates within metabolic intermediate biosynthesis; acetyl-CoA biosynthesis; acetyl-CoA from acetate: step 1/2. Catalyzes the formation of acetyl phosphate from acetate and ATP. Can also catalyze the reverse reaction. This Nitratidesulfovibrio vulgaris (strain ATCC 29579 / DSM 644 / CCUG 34227 / NCIMB 8303 / VKM B-1760 / Hildenborough) (Desulfovibrio vulgaris) protein is Acetate kinase.